We begin with the raw amino-acid sequence, 301 residues long: Possible hemolysin C (301 aa).

2 consecutive CBS domains span residues 79–141 (MVPR…NFRL) and 144–201 (LIRK…IDDE).

The protein belongs to the UPF0053 family. Hemolysin C subfamily.

The sequence is that of Possible hemolysin C (tlyC) from Rickettsia bellii (strain RML369-C).